Reading from the N-terminus, the 404-residue chain is uncharacterized protein (404 aa).

Transmembrane regions (helical) follow at residues 15–35 (WSLL…PGFL), 43–63 (NTLA…DIFA), 84–104 (MVLP…GLAF), 121–141 (GITP…IFVI), 154–174 (IAGF…APPV), 187–207 (ISIF…ITFA), 231–251 (VVGI…VLGV), 279–299 (IFGL…AYTS), 316–336 (GIII…GQPA), 338–358 (ILVL…GTLL), and 373–393 (PLWL…MGIY).

Belongs to the NRAMP family.

Its subcellular location is the cell membrane. This is an uncharacterized protein from Bacillus subtilis (strain 168).